Consider the following 335-residue polypeptide: Biotin synthase (335 aa).

In terms of domain architecture, Radical SAM core spans 43-269 (YFGKKVKLNM…INPTKEIRIA (227 aa)). Residues cysteine 61, cysteine 65, and cysteine 68 each contribute to the [4Fe-4S] cluster site. Residues cysteine 104, cysteine 137, cysteine 197, and arginine 267 each coordinate [2Fe-2S] cluster.

The protein belongs to the radical SAM superfamily. Biotin synthase family. In terms of assembly, homodimer. Requires [4Fe-4S] cluster as cofactor. The cofactor is [2Fe-2S] cluster.

The enzyme catalyses (4R,5S)-dethiobiotin + (sulfur carrier)-SH + 2 reduced [2Fe-2S]-[ferredoxin] + 2 S-adenosyl-L-methionine = (sulfur carrier)-H + biotin + 2 5'-deoxyadenosine + 2 L-methionine + 2 oxidized [2Fe-2S]-[ferredoxin]. Its pathway is cofactor biosynthesis; biotin biosynthesis; biotin from 7,8-diaminononanoate: step 2/2. In terms of biological role, catalyzes the conversion of dethiobiotin (DTB) to biotin by the insertion of a sulfur atom into dethiobiotin via a radical-based mechanism. The sequence is that of Biotin synthase from Staphylococcus aureus (strain USA300).